The primary structure comprises 339 residues: Phosphate acyltransferase (339 aa).

Belongs to the PlsX family. As to quaternary structure, homodimer. Probably interacts with PlsY.

It is found in the cytoplasm. It catalyses the reaction a fatty acyl-[ACP] + phosphate = an acyl phosphate + holo-[ACP]. The protein operates within lipid metabolism; phospholipid metabolism. Its function is as follows. Catalyzes the reversible formation of acyl-phosphate (acyl-PO(4)) from acyl-[acyl-carrier-protein] (acyl-ACP). This enzyme utilizes acyl-ACP as fatty acyl donor, but not acyl-CoA. The sequence is that of Phosphate acyltransferase from Ruthia magnifica subsp. Calyptogena magnifica.